A 104-amino-acid chain; its full sequence is Replication restart protein PriB (104 aa).

An SSB domain is found at 1–101 (MTNRLELSGI…LHAEQIELID (101 aa)).

It belongs to the PriB family. In terms of assembly, homodimer. Interacts with DnaT. Interacts with PriA. Component of the replication restart primosome. Primosome assembly occurs via a 'hand-off' mechanism. PriA binds to replication forks, subsequently PriB then DnaT bind; DnaT then displaces ssDNA to generate the helicase loading substrate.

Its function is as follows. Involved in the restart of stalled replication forks, which reloads the replicative helicase on sites far from the origin of replication; the PriA-PriB pathway is the major replication restart pathway. During primosome assembly it facilitates complex formation between PriA and DnaT on DNA; stabilizes PriA on DNA. Stimulates the DNA unwinding activity of PriA helicase. Functionally, binds single-stranded (ss)DNA at the primosome assembly site (PAS). One study finds it binds 15 nucleotide (nt) ssDNA. Another study finds the minimal ssDNA length for binding to PriB is 25 nt; prefers dT(30) over dA(30). Also binds 22 nt dsDNA. The polypeptide is Replication restart protein PriB (Klebsiella pneumoniae subsp. pneumoniae (strain ATCC 700721 / MGH 78578)).